A 419-amino-acid chain; its full sequence is Double-stranded RNA-binding protein 1 (419 aa).

DRBM domains follow at residues 15–84 (VFKS…ELAK) and 101–170 (LCKN…AIQS). A Bipartite nuclear localization motif is present at residues 207–222 (KARKAQFKKKAQKGKR). Tandem repeats lie at residues 247 to 274 (EKIE…SVET), 275 to 302 (EKIE…SVET), 303 to 330 (EKIE…SVET), 331 to 358 (EKIE…SVET), 359 to 386 (EKIE…SVET), and 387 to 414 (EKIE…SVET). The tract at residues 247–414 (EKIETTPNLE…KEAAFGSVET (168 aa)) is 6 X 28 AA repeats of E-K-I-E-T-T-P-N-L-E-[PS]-[PS]-S-C-M-[NS]-G-L-K-E-A-A-F-G-S-V-E-T.

Homodimer. Heterodimer with DRB2, DRB4 or DRB5. Interacts with SE and DCL1. Interacts with RCF3, RS40 and RS41. Expressed in rosette and cauline leaves, stems, roots, flowers and siliques.

The protein localises to the nucleus. Its subcellular location is the nucleus speckle. In terms of biological role, double-stranded RNA-binding protein involved in RNA-mediated post-transcriptional gene silencing (PTGS). Functions in the microRNAs (miRNAs) biogenesis by assisting DICER-LIKE 1 (DCL1) in the accurate processing from primary miRNAs (pri-miRNAs) to miRNAs in the nucleus. Forms a complex with SERRATE (SE) and DCL1 to promote accurate processing of pri-miRNAs by DCL1. Binds and assist DCL1 for accurate processing of precursor miRNAs (pre-miRNA). Indirectly involved in the production of trans-acting small interfering RNAs (ta-siRNAs) derived from the TAS1, TAS2 or TAS3 endogenous transcripts by participating in the production of their initiating miRNAs. Involved with argonaute 1 (AGO1) in the guide strand selection from miRNA duplexes, presumably by directional loading of the miRNA duplex (guide stand and passenger strand) onto the RNA-induced silencing complex (RISC) for passenger strand degradation. Does not participate in sense transgene-induced post-transcriptional gene silencing (S-PTGS). Involved in several plant development aspects and response to hormones through its role in miRNAs processing. This chain is Double-stranded RNA-binding protein 1 (DRB1), found in Arabidopsis thaliana (Mouse-ear cress).